We begin with the raw amino-acid sequence, 534 residues long: CTP synthase (534 aa).

An amidoligase domain region spans residues 1-267 (MTKYIFVTGG…DQIVCDHLKL (267 aa)). Serine 13 lines the CTP pocket. Serine 13 is a binding site for UTP. ATP is bound at residue 14–19 (SIGKGI). Tyrosine 54 is an L-glutamine binding site. Aspartate 71 contacts ATP. Aspartate 71 and glutamate 141 together coordinate Mg(2+). CTP contacts are provided by residues 148–150 (DIE), 188–193 (KTKPTQ), and lysine 224. UTP is bound by residues 188-193 (KTKPTQ) and lysine 224. 240–242 (RDV) provides a ligand contact to ATP. A Glutamine amidotransferase type-1 domain is found at 292-534 (KIALVGKYVE…FVTAAIKNSN (243 aa)). An L-glutamine-binding site is contributed by glycine 354. Cysteine 381 (nucleophile; for glutamine hydrolysis) is an active-site residue. L-glutamine contacts are provided by residues 382–385 (LGMQ), glutamate 405, and arginine 463. Residues histidine 508 and glutamate 510 contribute to the active site.

Belongs to the CTP synthase family. As to quaternary structure, homotetramer.

It catalyses the reaction UTP + L-glutamine + ATP + H2O = CTP + L-glutamate + ADP + phosphate + 2 H(+). The enzyme catalyses L-glutamine + H2O = L-glutamate + NH4(+). It carries out the reaction UTP + NH4(+) + ATP = CTP + ADP + phosphate + 2 H(+). The protein operates within pyrimidine metabolism; CTP biosynthesis via de novo pathway; CTP from UDP: step 2/2. Allosterically activated by GTP, when glutamine is the substrate; GTP has no effect on the reaction when ammonia is the substrate. The allosteric effector GTP functions by stabilizing the protein conformation that binds the tetrahedral intermediate(s) formed during glutamine hydrolysis. Inhibited by the product CTP, via allosteric rather than competitive inhibition. Its function is as follows. Catalyzes the ATP-dependent amination of UTP to CTP with either L-glutamine or ammonia as the source of nitrogen. Regulates intracellular CTP levels through interactions with the four ribonucleotide triphosphates. The protein is CTP synthase of Streptococcus pyogenes serotype M4 (strain MGAS10750).